Reading from the N-terminus, the 400-residue chain is Enoyl-[acyl-carrier-protein] reductase [NADH] 2 (400 aa).

NAD(+) is bound by residues 48–53 (GASSGF), 75–76 (FE), 112–113 (DA), and 141–142 (LA). Residue Y227 coordinates substrate. Y237 (proton donor) is an active-site residue. Residues K246 and 275–277 (LVT) contribute to the NAD(+) site.

Belongs to the TER reductase family. In terms of assembly, monomer.

It carries out the reaction a 2,3-saturated acyl-[ACP] + NAD(+) = a (2E)-enoyl-[ACP] + NADH + H(+). Its pathway is lipid metabolism; fatty acid biosynthesis. Functionally, involved in the final reduction of the elongation cycle of fatty acid synthesis (FAS II). Catalyzes the reduction of a carbon-carbon double bond in an enoyl moiety that is covalently linked to an acyl carrier protein (ACP). The sequence is that of Enoyl-[acyl-carrier-protein] reductase [NADH] 2 from Photobacterium profundum (strain SS9).